The following is a 339-amino-acid chain: Anthranilate phosphoribosyltransferase (339 aa).

Residues Gly81, 84-85 (GD), 91-94 (NIST), 109-117 (KHGNRAASS), and Ser121 each bind 5-phospho-alpha-D-ribose 1-diphosphate. Residue Gly81 participates in anthranilate binding. Mg(2+) is bound at residue Ser93. An anthranilate-binding site is contributed by Asn112. Arg167 is an anthranilate binding site. Residues Asp226 and Glu227 each coordinate Mg(2+).

Belongs to the anthranilate phosphoribosyltransferase family. Homodimer. The cofactor is Mg(2+).

The enzyme catalyses N-(5-phospho-beta-D-ribosyl)anthranilate + diphosphate = 5-phospho-alpha-D-ribose 1-diphosphate + anthranilate. The protein operates within amino-acid biosynthesis; L-tryptophan biosynthesis; L-tryptophan from chorismate: step 2/5. Catalyzes the transfer of the phosphoribosyl group of 5-phosphorylribose-1-pyrophosphate (PRPP) to anthranilate to yield N-(5'-phosphoribosyl)-anthranilate (PRA). The polypeptide is Anthranilate phosphoribosyltransferase (Maricaulis maris (strain MCS10) (Caulobacter maris)).